The sequence spans 266 residues: uncharacterized protein (266 aa).

The protein belongs to the chlamydial CPn_0087/CT_309/TC_0583 family.

This is an uncharacterized protein from Chlamydia trachomatis serovar D (strain ATCC VR-885 / DSM 19411 / UW-3/Cx).